The sequence spans 738 residues: NAD(P)H-quinone oxidoreductase subunit 5, chloroplastic (738 aa).

The next 16 helical transmembrane spans lie at 9–29 (WIIP…LLLF), 40–60 (WAFP…NLSI), 89–109 (IDPL…MVLI), 125–145 (FASM…SNLI), 147–167 (IYIF…FWFT), 185–205 (GDFG…SFEF), 230–250 (AALL…HVWL), 258–278 (TPIS…FLVA), 280–300 (LLPL…IGII), 327–347 (LGYM…FHLI), 354–374 (ALLF…VGYS), 396–416 (ISFL…CFWS), 425–445 (WLYS…TAFY), 546–566 (LFPL…GIPF), 603–623 (FSVS…KPIY), and 718–738 (YLFF…FPVF).

The protein belongs to the complex I subunit 5 family. In terms of assembly, NDH is composed of at least 16 different subunits, 5 of which are encoded in the nucleus.

It is found in the plastid. Its subcellular location is the chloroplast thylakoid membrane. The catalysed reaction is a plastoquinone + NADH + (n+1) H(+)(in) = a plastoquinol + NAD(+) + n H(+)(out). The enzyme catalyses a plastoquinone + NADPH + (n+1) H(+)(in) = a plastoquinol + NADP(+) + n H(+)(out). NDH shuttles electrons from NAD(P)H:plastoquinone, via FMN and iron-sulfur (Fe-S) centers, to quinones in the photosynthetic chain and possibly in a chloroplast respiratory chain. The immediate electron acceptor for the enzyme in this species is believed to be plastoquinone. Couples the redox reaction to proton translocation, and thus conserves the redox energy in a proton gradient. This is NAD(P)H-quinone oxidoreductase subunit 5, chloroplastic (ndhF) from Ligustrum vulgare (Common privet).